A 70-amino-acid chain; its full sequence is Putative membrane protein insertion efficiency factor (70 aa).

Belongs to the UPF0161 family.

The protein localises to the cell inner membrane. Functionally, could be involved in insertion of integral membrane proteins into the membrane. This chain is Putative membrane protein insertion efficiency factor, found in Rhizorhabdus wittichii (strain DSM 6014 / CCUG 31198 / JCM 15750 / NBRC 105917 / EY 4224 / RW1) (Sphingomonas wittichii).